The primary structure comprises 510 residues: Gallate 1-beta-glucosyltransferase (510 aa).

Residue His-19 is the Proton acceptor of the active site. Position 19 (His-19) interacts with an anthocyanidin. Residues Gln-343, His-358, Trp-361, Asn-362, Ser-363, and Glu-366 each contribute to the UDP-alpha-D-glucose site. Gly-381 is a binding site for an anthocyanidin. Residues Asp-382 and Gln-383 each coordinate UDP-alpha-D-glucose.

Belongs to the UDP-glycosyltransferase family. Expressed in swelling buds and young leaves.

The enzyme catalyses 3,4,5-trihydroxybenzoate + UDP-alpha-D-glucose = 1-O-galloyl-beta-D-glucose + UDP. The catalysed reaction is vanillate + UDP-alpha-D-glucose = 1-O-(4-hydroxy-3-methoxybenzoyl)-beta-D-glucose + UDP. It carries out the reaction 3,4-dihydroxybenzoate + UDP-alpha-D-glucose = 1-O-(3,4-dihydroxy-benzoyl)-beta-D-glucose + UDP. In terms of biological role, glucosyltransferase that catalyzes the formation of 1-O-beta-D-glucose esters with hydroxybenzoic acids as preferred glucosyl acceptors. Has the highest activity with 3,4-dihydroxybenzoate, vanillate and gallate in vitro. Gallate is the predicted native substrate of the enzyme, which thus catalyzes the formation of 1-O-galloyl-beta-D-glucose, the first committed step of gallotannin biosynthesis. In Quercus robur (English oak), this protein is Gallate 1-beta-glucosyltransferase.